A 440-amino-acid chain; its full sequence is Tubulin beta-3 chain (440 aa).

Positions 2, 60, 129, 133, 134, 135, 195, and 217 each coordinate GTP. Residue glutamate 60 participates in Mg(2+) binding. Residues serine 411–glutamate 440 form a disordered region. Positions threonine 420–glutamate 440 are enriched in acidic residues.

It belongs to the tubulin family. In terms of assembly, dimer of alpha and beta chains. A typical microtubule is a hollow water-filled tube with an outer diameter of 25 nm and an inner diameter of 15 nM. Alpha-beta heterodimers associate head-to-tail to form protofilaments running lengthwise along the microtubule wall with the beta-tubulin subunit facing the microtubule plus end conferring a structural polarity. Microtubules usually have 13 protofilaments but different protofilament numbers can be found in some organisms and specialized cells. Requires Mg(2+) as cofactor.

The protein resides in the cytoplasm. It is found in the cytoskeleton. Functionally, tubulin is the major constituent of microtubules, a cylinder consisting of laterally associated linear protofilaments composed of alpha- and beta-tubulin heterodimers. Microtubules grow by the addition of GTP-tubulin dimers to the microtubule end, where a stabilizing cap forms. Below the cap, tubulin dimers are in GDP-bound state, owing to GTPase activity of alpha-tubulin. This chain is Tubulin beta-3 chain (TUBB3), found in Pisum sativum (Garden pea).